Here is a 294-residue protein sequence, read N- to C-terminus: 4-hydroxy-tetrahydrodipicolinate synthase (294 aa).

Position 45 (T45) interacts with pyruvate. The active-site Proton donor/acceptor is Y133. The Schiff-base intermediate with substrate role is filled by K161. I203 contributes to the pyruvate binding site.

It belongs to the DapA family. In terms of assembly, homotetramer; dimer of dimers.

The protein resides in the cytoplasm. It carries out the reaction L-aspartate 4-semialdehyde + pyruvate = (2S,4S)-4-hydroxy-2,3,4,5-tetrahydrodipicolinate + H2O + H(+). It participates in amino-acid biosynthesis; L-lysine biosynthesis via DAP pathway; (S)-tetrahydrodipicolinate from L-aspartate: step 3/4. Its function is as follows. Catalyzes the condensation of (S)-aspartate-beta-semialdehyde [(S)-ASA] and pyruvate to 4-hydroxy-tetrahydrodipicolinate (HTPA). The polypeptide is 4-hydroxy-tetrahydrodipicolinate synthase (Shewanella baltica (strain OS223)).